The primary structure comprises 534 residues: Neryl diphosphate diphosphatase, chloroplastic (534 aa).

Asp-272, Asp-276, Asp-416, and Glu-424 together coordinate Mg(2+). Residues 272 to 276 carry the DDXXD motif motif; that stretch reads DDIFD.

The protein belongs to the terpene synthase family. Mg(2+) is required as a cofactor.

The protein resides in the plastid. Its subcellular location is the chloroplast. It catalyses the reaction neryl diphosphate + H2O = nerol + diphosphate. It participates in secondary metabolite biosynthesis; terpenoid biosynthesis. Monoterpene synthase that catalyzes the hydrolysis of neryl diphosphate (NPP) to form nerol and diphosphate. Is specific for NPP and has no hydrolase activity toward geranyl diphosphate (GPP) or farnesyl diphosphate (FPP). The monoterpene nerol may have an insect repellent effect for the plant leaves. In Glycine max (Soybean), this protein is Neryl diphosphate diphosphatase, chloroplastic.